Consider the following 125-residue polypeptide: Prefoldin subunit beta (125 aa).

This sequence belongs to the prefoldin subunit beta family. In terms of assembly, heterohexamer of two alpha and four beta subunits.

Its subcellular location is the cytoplasm. In terms of biological role, molecular chaperone capable of stabilizing a range of proteins. Seems to fulfill an ATP-independent, HSP70-like function in archaeal de novo protein folding. The polypeptide is Prefoldin subunit beta (Pyrobaculum islandicum (strain DSM 4184 / JCM 9189 / GEO3)).